The following is a 300-amino-acid chain: Transcription initiation factor IIB (300 aa).

The segment at 2–34 (NKQKVCPACESAELIYDPERGEIVCAKCGYVIE) adopts a TFIIB-type zinc-finger fold. Zn(2+) is bound by residues Cys-7, Cys-10, Cys-26, and Cys-29. Repeat copies occupy residues 114–197 (SELD…ARNL) and 210–291 (DYVN…ELVE).

It belongs to the TFIIB family.

Functionally, stabilizes TBP binding to an archaeal box-A promoter. Also responsible for recruiting RNA polymerase II to the pre-initiation complex (DNA-TBP-TFIIB). The sequence is that of Transcription initiation factor IIB from Pyrococcus furiosus (strain ATCC 43587 / DSM 3638 / JCM 8422 / Vc1).